Here is a 341-residue protein sequence, read N- to C-terminus: Thromboxane A2 receptor (341 aa).

Residues 1-29 (MWLNSTSLGACFRPVNITLQERRAIASPW) are Extracellular-facing. N-linked (GlcNAc...) asparagine glycosylation is found at Asn-4 and Asn-16. The chain crosses the membrane as a helical span at residues 30–52 (FAASFCALGLGSNLLALSVLAGA). Over 53–65 (RPGAGPRSSFLAL) the chain is Cytoplasmic. The chain crosses the membrane as a helical span at residues 66-86 (LCGLVLTDFLGLLVTGAVVAS). Topologically, residues 87–105 (QHAALLDWRATDPGCRLCH) are extracellular. Residues Cys-104 and Cys-181 are joined by a disulfide bond. Residues 106–127 (FMGAAMVFFGLCPLLLGAAMAA) form a helical membrane-spanning segment. At 128–147 (ERFVGITRPFSRPAATSRRA) the chain is on the cytoplasmic side. Residues 148–170 (WATVGLVWVGAGTLGLLPLLGLG) form a helical membrane-spanning segment. Over 171–191 (RYSVQYPGSWCFLTLGAERGD) the chain is Extracellular. Residues 192 to 217 (VAFGLMFALLGSVSVGLSLLLNTVSV) traverse the membrane as a helical segment. The Cytoplasmic segment spans residues 218–244 (ATLCRVYHAREATQRPRDCEVEMMVQL). The helical transmembrane segment at 245 to 268 (VGIMVVATVCWMPLLVFILQTLLQ) threads the bilayer. Topologically, residues 269-287 (TLPVMSPSGQLLRTTERQL) are extracellular. Residues 288–309 (LIYLRVATWNQILDPWVYILFR) form a helical membrane-spanning segment. Over 310 to 341 (RSVLRRLHPRFTSQLQAVSLHSPPTQAMLSGP) the chain is Cytoplasmic. Ser-328 is modified (phosphoserine).

It belongs to the G-protein coupled receptor 1 family. In terms of assembly, interacts with RPGRIP1L. Interacts with RACK1; the interaction regulates TBXA2R cell surface expression. In the brain, expressed in all types of glial cells. In the kidney, expressed in the mesangial cells of the glomerulus, smooth muscle cells of the renal arterioles, and in transitional cell epithelium of renal pelvis.

The protein localises to the cell membrane. Receptor for thromboxane A2 (TXA2), a potent stimulator of platelet aggregation. The activity of this receptor is mediated by a G-protein that activates a phosphatidylinositol-calcium second messenger system. In the kidney, the binding of TXA2 to glomerular TP receptors causes intense vasoconstriction. Activates phospholipase C and adenylyl cyclase. This chain is Thromboxane A2 receptor (Tbxa2r), found in Rattus norvegicus (Rat).